The chain runs to 426 residues: MVCVACVEENKGCECEHEKPVRELVLEAASENSSFLHSVINMVGMLIGLGQLSMPYAVESGGWMSIFLLISFGILTTYTSHILGKCIRRNPKSKSYSDIGYSAFGRHGRLIVCLFIYLEIFMALVSYTISLHDNISAAFPATFSNHGHFPAAKLTAVAVAIALPSLWIRDLSSISFLSSGGILMSAIIFGSVVYTAIFGGVIDDGKIPVLRLENIPTVSGIYLFSFGGHIVFPNLYTSMKDPSKFTKVSIVSFATVTALYGALAITGAKMFGPSVNSQITLSLPKHLVVTKIALWATVLTPMTKYALEFAPLAIQLERSLPSTMTDRTKLVARGLMGSALLLVILALALTVPYFGYVLSLTGSLVSVTIAVTLPSAFYLKICWDGMTKFTRAANLGFVVLGCVLGVLGSFESSKLLVKELVRVHGG.

11 helical membrane-spanning segments follow: residues 34–54 (SFLH…QLSM), 55–75 (PYAV…FGIL), 110–130 (LIVC…YTIS), 148–168 (HFPA…SLWI), 182–202 (ILMS…GGVI), 215–235 (IPTV…FPNL), 248–268 (VSIV…ITGA), 292–312 (IALW…FAPL), 340–360 (LLLV…VLSL), 363–383 (SLVS…KICW), and 392–412 (AANL…SFES).

The protein belongs to the amino acid/polyamine transporter 2 family. Amino acid/auxin permease (AAAP) (TC 2.A.18.5) subfamily.

It is found in the membrane. This chain is Amino acid transporter AVT1H, found in Arabidopsis thaliana (Mouse-ear cress).